The primary structure comprises 234 residues: Geranylgeranylglyceryl phosphate synthase (234 aa).

Mg(2+) contacts are provided by Asp24 and Ser52. Sn-glycerol 1-phosphate contacts are provided by residues 172–178 (YLEAGSG), 203–204 (GG), and 225–226 (GT).

It belongs to the GGGP/HepGP synthase family. Group II subfamily. As to quaternary structure, homodimer. Mg(2+) is required as a cofactor.

It carries out the reaction sn-glycerol 1-phosphate + (2E,6E,10E)-geranylgeranyl diphosphate = sn-3-O-(geranylgeranyl)glycerol 1-phosphate + diphosphate. Its function is as follows. Prenyltransferase that catalyzes the transfer of the geranylgeranyl moiety of geranylgeranyl diphosphate (GGPP) to the C3 hydroxyl of sn-glycerol-1-phosphate (G1P). In Zunongwangia profunda (strain DSM 18752 / CCTCC AB 206139 / SM-A87) (Wangia profunda), this protein is Geranylgeranylglyceryl phosphate synthase.